The following is a 248-amino-acid chain: Inhibitor of growth protein 4 (248 aa).

The stretch at 25 to 118 (FQLMRDLDQR…ADLKEKQIES (94 aa)) forms a coiled coil. Lysine 112, lysine 127, and lysine 129 each carry N6-acetyllysine. Positions 115–160 (QIESSDYDSSSSKGKKSRTQKEKKAARARSKGKNSDEEAPKAAQKK) are disordered. The Bipartite nuclear localization signal motif lies at 127 to 147 (KGKKSRTQKEKKAARARSKGK). Position 132 is a citrulline (arginine 132). Residues lysine 145, lysine 147, and lysine 155 each carry the N6-acetyllysine modification. Arginine 165 carries the citrulline modification. A PHD-type zinc finger spans residues 195–244 (PTYCLCHQVSYGEMIGCDNPDCSIERFHFACVGLTTKPRGKWFCPRCSQE). The Zn(2+) site is built by cysteine 198, cysteine 200, cysteine 211, cysteine 216, histidine 222, cysteine 225, cysteine 238, and cysteine 241.

Belongs to the ING family. In terms of assembly, homodimer. Component of the HBO1 complex composed of KAT7/HBO1, MEAF6, ING4 or ING5, and one scaffold subunit: complexes containing BRPF scaffold (BRPF1, BRD1/BRPF2 or BRPF3) direct KAT7/HBO1 specificity towards H3K14ac, while complexes containing JADE scaffold (JADE1, JADE2 and JADE3) mediate acetylation of histone H4. Interacts with H3K4me3 and to a lesser extent with H3K4me2, the interaction augments KAT7/HBO1 acetylation activity on H3 tails. Interacts with EP300, RELA and TP53; these interactions may be indirect. Interacts with EGLN1. Interacts with BCL2A1. Citrullination by PADI4 within the nuclear localization signal disrupts the interaction with p53 and increases susceptibility to degradation.

It is found in the nucleus. Functionally, component of HBO1 complexes, which specifically mediate acetylation of histone H3 at 'Lys-14' (H3K14ac), and have reduced activity toward histone H4. Through chromatin acetylation it may function in DNA replication. May inhibit tumor progression by modulating the transcriptional output of signaling pathways which regulate cell proliferation. Can suppress brain tumor angiogenesis through transcriptional repression of RELA/NFKB3 target genes when complexed with RELA. May also specifically suppress loss of contact inhibition elicited by activated oncogenes such as MYC. Represses hypoxia inducible factor's (HIF) activity by interacting with HIF prolyl hydroxylase 2 (EGLN1). Can enhance apoptosis induced by serum starvation in mammary epithelial cell line HC11. This Bos taurus (Bovine) protein is Inhibitor of growth protein 4 (ING4).